The primary structure comprises 1749 residues: Intraflagellar transport protein 172 homolog (1749 aa).

The residue at position 1 (M1) is an N-acetylmethionine. K4 participates in a covalent cross-link: Glycyl lysine isopeptide (Lys-Gly) (interchain with G-Cter in SUMO1). 9 WD repeats span residues 14 to 53 (DGAAKVTCMAWSQNNAKFAVCTVDRVVLLYDEHGERRDKF), 64 to 103 (RKSYMVKGMAFSPDSTKIAIGQTDNIIYVYKIGEDWGDKK), 110 to 148 (IQTSAVTCLQWPAEYVIVFGLAEGKVRLANTKTNKSSTI), 150 to 191 (GTES…ESQG), 195 to 233 (NHPCPPYALAWATNSIVAAGCDRRIVAYGKEGHVLQTFD), 238 to 278 (PQER…WEEA), 284 to 323 (ANLYTVTALAWKRDGSRLCAGTLCGGVEQFDCCLRRSIYK), 483 to 520 (SHESRVDWLELNETGHKLLFRDRKLRLHLYDIESCSKT), and 521 to 559 (MILNFCSYVQWVPGSDVLVAQNRNSLCVWYNIEAPERVT). Residues 593–624 (DEGLIEFGTAIDDGNYTRATAFLETLEMTPET) form a TPR 1 repeat. Residue R672 is modified to Omega-N-methylarginine. TPR repeat units lie at residues 692-725 (EKNYKLAEMIFLEQNAVEEAMDMYQELHRWEECI), 809-842 (GELYERAGDLFEKIRNPQRALECYCKGNAFMKAV), 854-887 (VRLEEAWGDHLVQQKQLDAAINHYIEARCSIKAI), 912-945 (SKYYPRVAQHYASLQEYEIAEELYTKGDRTKDAI), 947-970 (MYTQAGRWEQAHKLAMKCMRPEDV), 971-1004 (SVLYITQAQEMEKQGKYREAERLYVTVEEPDLAI), 1042-1075 (EGRLQEAEYHYLEAQEWKATVNMYRSSGLWEEAY), 1142-1175 (PEIHLKYAMYLEDEGKFEEAEAEFIRAGKPKEAV), 1276-1309 (VEGLVEQARQWEQAGEYSRAVDCYLKVRDSGSSG), 1345-1378 (IGKHSAAAELYLNLDLVKEAIDAFIEGEEWNKAK), 1411-1445 (GVDVVAALDLYVEQGQWDKCIETATKQNYKILHKY), 1447-1477 (ALYATHLIREGGYAQALALYVQHGAPANPQN), and 1574-1607 (DKAFYEAGTAAKEVGWENMAFIFLNRFLDLTDAI).

It belongs to the IFT172 family. In terms of assembly, interacts with IFT88. Interacts with IFT57. Interacts with RABL2/RABL2A; binds preferentially to GDP-bound RABL2. Co-localizes with RABL2/RABL2A in the midpiece of elongated spermatids within the testis (at protein level). Expressed in the flagellum of elongated spermatids and sperm in the testis lumen (at protein level).

The protein localises to the cell projection. The protein resides in the cilium. Functionally, required for the maintenance and formation of cilia. Plays an indirect role in hedgehog (Hh) signaling, cilia being required for all activity of the hedgehog pathway. In Mus musculus (Mouse), this protein is Intraflagellar transport protein 172 homolog (Ift172).